The primary structure comprises 537 residues: Cytochrome P450 CYP12A2 (537 aa).

Residue Cys-483 participates in heme binding.

This sequence belongs to the cytochrome P450 family. It depends on heme as a cofactor.

This is Cytochrome P450 CYP12A2 (CYP12A2) from Musca domestica (House fly).